The primary structure comprises 254 residues: Homeobox protein Dlx4b (254 aa).

Positions 129–188 (IRKPRTIYSSVQLQALHQRFQQTQYLALPERADLAAKLGLTQTQVKIWFQNKRSKYKKIM) form a DNA-binding region, homeobox.

The protein belongs to the distal-less homeobox family.

The protein localises to the nucleus. In terms of biological role, during larvae development, may be important for neurocranium morphogenesis. The chain is Homeobox protein Dlx4b (dlx4b) from Danio rerio (Zebrafish).